Consider the following 218-residue polypeptide: Glutathione S-transferase Mu 2 (218 aa).

The GST N-terminal domain maps to Pro-2 to Gly-88. Position 7-8 (Tyr-7–Trp-8) interacts with glutathione. 2 positions are modified to phosphoserine: Ser-27 and Ser-44. Glutathione contacts are provided by residues Arg-43 to Trp-46, Lys-50, Asn-59 to Leu-60, and Gln-72 to Ser-73. The 119-residue stretch at Ser-90 to Val-208 folds into the GST C-terminal domain. Tyr-116 contacts substrate.

Belongs to the GST superfamily. Mu family. Homodimer. In terms of tissue distribution, muscle.

Its subcellular location is the cytoplasm. The enzyme catalyses RX + glutathione = an S-substituted glutathione + a halide anion + H(+). It catalyses the reaction 11(S)-hydroxy-14(S),15(S)-epoxy-(5Z,8Z,12E)-eicosatrienoate + glutathione = (11S,15S)-dihydroxy-14(R)-S-glutathionyl-(5Z,8Z,12E)-eicosatrienoate. Functionally, conjugation of reduced glutathione to a wide number of exogenous and endogenous hydrophobic electrophiles. Participates in the formation of novel hepoxilin regioisomers. The sequence is that of Glutathione S-transferase Mu 2 from Homo sapiens (Human).